The primary structure comprises 40 residues: MPGAFSQNSSKRRAVLPRSHRVAGRGPAEAGCLPGAPAGS.

The disordered stretch occupies residues 1-40; sequence MPGAFSQNSSKRRAVLPRSHRVAGRGPAEAGCLPGAPAGS. Over residues 10–23 the composition is skewed to basic residues; the sequence is SKRRAVLPRSHRVA.

The protein is Putative protein FAM86JP of Homo sapiens (Human).